The primary structure comprises 111 residues: Probable 4-amino-4-deoxy-L-arabinose-phosphoundecaprenol flippase subunit ArnE (111 aa).

The next 3 membrane-spanning stretches (helical) occupy residues 38-58 (LWLG…LLVL), 61-81 (LPVG…TLAA), and 91-111 (PRHW…GSAA). An EamA domain is found at 40 to 109 (LGLALICMGA…IISGIIILGS (70 aa)).

Belongs to the ArnE family. As to quaternary structure, heterodimer of ArnE and ArnF.

The protein localises to the cell inner membrane. It functions in the pathway bacterial outer membrane biogenesis; lipopolysaccharide biosynthesis. In terms of biological role, translocates 4-amino-4-deoxy-L-arabinose-phosphoundecaprenol (alpha-L-Ara4N-phosphoundecaprenol) from the cytoplasmic to the periplasmic side of the inner membrane. This is Probable 4-amino-4-deoxy-L-arabinose-phosphoundecaprenol flippase subunit ArnE from Salmonella enteritidis PT4 (strain P125109).